The primary structure comprises 220 residues: MKLNKYIDHTLLKPEATKEQIEKVIEEAKEYDFASVCVNPTWVKLAAEGLSGSDVKVCTVIGFPLGATTPEVKAFETKNAIENGADEIDMVINIGALKSGNLDLLERDIQAVVEASGEKLVKVIIETCLLTDQEKVLACQVSQKAGADFVKTSTGFSTGGATVEDVALMRQTVGPDMGVKASGGARSYDDAQAFIKAGATRIGASSGVAIMKGETASGNY.

Asp-89 (proton donor/acceptor) is an active-site residue. The Schiff-base intermediate with acetaldehyde role is filled by Lys-151. Residue Lys-180 is the Proton donor/acceptor of the active site.

The protein belongs to the DeoC/FbaB aldolase family. DeoC type 1 subfamily.

It localises to the cytoplasm. The enzyme catalyses 2-deoxy-D-ribose 5-phosphate = D-glyceraldehyde 3-phosphate + acetaldehyde. It participates in carbohydrate degradation; 2-deoxy-D-ribose 1-phosphate degradation; D-glyceraldehyde 3-phosphate and acetaldehyde from 2-deoxy-alpha-D-ribose 1-phosphate: step 2/2. In terms of biological role, catalyzes a reversible aldol reaction between acetaldehyde and D-glyceraldehyde 3-phosphate to generate 2-deoxy-D-ribose 5-phosphate. The protein is Deoxyribose-phosphate aldolase of Streptococcus gordonii (strain Challis / ATCC 35105 / BCRC 15272 / CH1 / DL1 / V288).